The primary structure comprises 2112 residues: Phenolphthiocerol synthesis polyketide synthase type I Pks15/1 (2112 aa).

The region spanning 46–469 is the Ketosynthase family 3 (KS3) domain; that stretch reads TEPVAVVGIG…GTNAHLILEE (424 aa). Residues C216, H351, and H391 each act as for beta-ketoacyl synthase activity in the active site. The tract at residues 579-893 is acyltransferase; that stretch reads TVVVFPGQGA…GQVFTTGVPV (315 aa). The For acyltransferase activity role is filled by S670. The segment at 941-1063 is N-terminal hotdog fold; the sequence is HALLGAVVER…GMLGVAAAET (123 aa). Positions 941–1101 are dehydratase; that stretch reads HALLGAVVER…YAYGPAFQGL (161 aa). The 275-residue stretch at 941 to 1215 folds into the PKS/mFAS DH domain; that stretch reads HALLGAVVER…TRPITAEQLR (275 aa). Residue H973 is the Proton acceptor; for dehydratase activity of the active site. A C-terminal hotdog fold region spans residues 1075–1215; the sequence is AESVDISDGY…TRPITAEQLR (141 aa). D1136 functions as the Proton donor; for dehydratase activity in the catalytic mechanism. The segment at 1406–1711 is enoylreductase; sequence GTLEDLVIQP…QARHIGKVVL (306 aa). NADP(+)-binding positions include 1536–1553 and 1725–1740; these read VLIH…VQLA and TVVI…GVLA. Residues 1724–1905 form a beta-ketoacyl reductase region; it reads GTVVITGATG…SLAWGLWEQP (182 aa). Residues 2010-2085 enclose the Carrier domain; the sequence is ELLVGLVCLQ…AVAEYVAQQM (76 aa). S2045 is subject to O-(pantetheine 4'-phosphoryl)serine. The segment covering 2084–2100 has biased composition (polar residues); that stretch reads QMSGSRPTESGDPTSQV. Positions 2084–2112 are disordered; the sequence is QMSGSRPTESGDPTSQVVEPAAAEVSVHA.

This sequence belongs to the thiolase-like superfamily. Beta-ketoacyl-ACP synthases family. Pantetheine 4'-phosphate is required as a cofactor.

The catalysed reaction is a fatty acyl-[ACP] + malonyl-[ACP] + H(+) = a 3-oxoacyl-[ACP] + holo-[ACP] + CO2. It functions in the pathway lipid metabolism; fatty acid biosynthesis. Catalyzes the elongation by iterative transfer of p-hydroxybenzoyl group from FadD22 (pHBA-S-FAdD22) to form p-hydroxyphenylalkanoate (pHPA) intermediates during phenolphthiocerol (PPOL) biosynthesis. PPOL is an important intermediate in the biosynthesis of phenolic glycolipid (mycosid B). The sequence is that of Phenolphthiocerol synthesis polyketide synthase type I Pks15/1 (pks15/1) from Mycobacterium bovis (strain ATCC BAA-935 / AF2122/97).